We begin with the raw amino-acid sequence, 161 residues long: SsrA-binding protein (161 aa).

The protein belongs to the SmpB family.

It localises to the cytoplasm. In terms of biological role, required for rescue of stalled ribosomes mediated by trans-translation. Binds to transfer-messenger RNA (tmRNA), required for stable association of tmRNA with ribosomes. tmRNA and SmpB together mimic tRNA shape, replacing the anticodon stem-loop with SmpB. tmRNA is encoded by the ssrA gene; the 2 termini fold to resemble tRNA(Ala) and it encodes a 'tag peptide', a short internal open reading frame. During trans-translation Ala-aminoacylated tmRNA acts like a tRNA, entering the A-site of stalled ribosomes, displacing the stalled mRNA. The ribosome then switches to translate the ORF on the tmRNA; the nascent peptide is terminated with the 'tag peptide' encoded by the tmRNA and targeted for degradation. The ribosome is freed to recommence translation, which seems to be the essential function of trans-translation. This Psychromonas ingrahamii (strain DSM 17664 / CCUG 51855 / 37) protein is SsrA-binding protein.